The primary structure comprises 146 residues: Phosphoribosyl-AMP cyclohydrolase (146 aa).

Residue D95 participates in Mg(2+) binding. C96 is a binding site for Zn(2+). The Mg(2+) site is built by D97 and D99. Residues C112 and C119 each coordinate Zn(2+).

The protein belongs to the PRA-CH family. In terms of assembly, homodimer. The cofactor is Mg(2+). Requires Zn(2+) as cofactor.

The protein localises to the cytoplasm. The enzyme catalyses 1-(5-phospho-beta-D-ribosyl)-5'-AMP + H2O = 1-(5-phospho-beta-D-ribosyl)-5-[(5-phospho-beta-D-ribosylamino)methylideneamino]imidazole-4-carboxamide. It functions in the pathway amino-acid biosynthesis; L-histidine biosynthesis; L-histidine from 5-phospho-alpha-D-ribose 1-diphosphate: step 3/9. In terms of biological role, catalyzes the hydrolysis of the adenine ring of phosphoribosyl-AMP. The sequence is that of Phosphoribosyl-AMP cyclohydrolase from Chromohalobacter salexigens (strain ATCC BAA-138 / DSM 3043 / CIP 106854 / NCIMB 13768 / 1H11).